Reading from the N-terminus, the 264-residue chain is Mediator of RNA polymerase II transcription subunit 4 (264 aa).

The segment at 183 to 264 (LTKLPGQEDG…DLDLFNPDEF (82 aa)) is disordered. The span at 200–225 (NEDKNIVKDAEGAEGEIRQDDKKEDD) shows a compositional bias: basic and acidic residues. Acidic residues predominate over residues 236 to 264 (AEGDEDKNAGEDEDEAMDSDLDLFNPDEF).

This sequence belongs to the Mediator complex subunit 4 family. As to quaternary structure, component of the Mediator complex.

The protein resides in the nucleus. Functionally, component of the Mediator complex, a coactivator involved in the regulated transcription of nearly all RNA polymerase II-dependent genes. Mediator functions as a bridge to convey information from gene-specific regulatory proteins to the basal RNA polymerase II transcription machinery. Mediator is recruited to promoters by direct interactions with regulatory proteins and serves as a scaffold for the assembly of a functional preinitiation complex with RNA polymerase II and the general transcription factors. The protein is Mediator of RNA polymerase II transcription subunit 4 (MED4) of Candida glabrata (strain ATCC 2001 / BCRC 20586 / JCM 3761 / NBRC 0622 / NRRL Y-65 / CBS 138) (Yeast).